A 394-amino-acid chain; its full sequence is Phosphoglycerate kinase (394 aa).

Residues 21 to 23 (DFN), Arg36, 59 to 62 (HLGR), Arg118, and Arg151 contribute to the substrate site. A Phosphoserine modification is found at Ser183. 2 residues coordinate ATP: Lys201 and Gly292. Thr299 is modified (phosphothreonine). Residues Glu323 and 350 to 353 (GGDS) each bind ATP.

Belongs to the phosphoglycerate kinase family. As to quaternary structure, monomer.

It is found in the cytoplasm. The enzyme catalyses (2R)-3-phosphoglycerate + ATP = (2R)-3-phospho-glyceroyl phosphate + ADP. Its pathway is carbohydrate degradation; glycolysis; pyruvate from D-glyceraldehyde 3-phosphate: step 2/5. In Bacillus mycoides (strain KBAB4) (Bacillus weihenstephanensis), this protein is Phosphoglycerate kinase.